Consider the following 154-residue polypeptide: Deoxyuridine 5'-triphosphate nucleotidohydrolase (154 aa).

Residues 74-76 (RSG), asparagine 87, 91-93 (TID), and lysine 101 each bind substrate.

This sequence belongs to the dUTPase family. It depends on Mg(2+) as a cofactor.

It catalyses the reaction dUTP + H2O = dUMP + diphosphate + H(+). The protein operates within pyrimidine metabolism; dUMP biosynthesis; dUMP from dCTP (dUTP route): step 2/2. This enzyme is involved in nucleotide metabolism: it produces dUMP, the immediate precursor of thymidine nucleotides and it decreases the intracellular concentration of dUTP so that uracil cannot be incorporated into DNA. This chain is Deoxyuridine 5'-triphosphate nucleotidohydrolase, found in Cytophaga hutchinsonii (strain ATCC 33406 / DSM 1761 / CIP 103989 / NBRC 15051 / NCIMB 9469 / D465).